Consider the following 317-residue polypeptide: Retinol dehydrogenase 16 (317 aa).

NAD(+) is bound at residue 33-57 (FITGCDSGFGNLLARQLDRRGMRVL). Substrate is bound at residue S164. Y176 (proton acceptor) is an active-site residue. Residues 289–308 (FFYLPMSYLPTFLVDALFYW) traverse the membrane as a helical segment.

It belongs to the short-chain dehydrogenases/reductases (SDR) family. As to quaternary structure, homodimer. Post-translationally, not N-glycosylated. As to expression, liver &gt; kidney &gt; brain &gt; lung &gt; testis.

It localises to the microsome membrane. Its subcellular location is the endoplasmic reticulum membrane. The enzyme catalyses all-trans-retinol--[retinol-binding protein] + NAD(+) = all-trans-retinal--[retinol-binding protein] + NADH + H(+). It carries out the reaction all-trans-retinol + NAD(+) = all-trans-retinal + NADH + H(+). The catalysed reaction is 13-cis-retinol + NAD(+) = 13-cis-retinal + NADH + H(+). It catalyses the reaction 11-cis-retinol + NAD(+) = 11-cis-retinal + NADH + H(+). The enzyme catalyses 9-cis-retinol + NAD(+) = 9-cis-retinal + NADH + H(+). It carries out the reaction 5alpha-androstane-3alpha,17beta-diol + NAD(+) = 17beta-hydroxy-5alpha-androstan-3-one + NADH + H(+). The catalysed reaction is androsterone + NAD(+) = 5alpha-androstan-3,17-dione + NADH + H(+). It participates in cofactor metabolism; retinol metabolism. Functionally, oxidoreductase with a preference for NAD. Oxidizes all-trans-retinol, 9-cis-retinol, 11-cis-retinol and 13-cis-retinol to the corresponding aldehydes. Has higher activity towards CRBP-bound retinol than with free retinol. Oxidizes 3-alpha-hydroxysteroids. Oxidizes androstanediol and androsterone to dihydrotestosterone and androstanedione. Can also catalyze the reverse reaction. This Rattus norvegicus (Rat) protein is Retinol dehydrogenase 16.